Here is a 169-residue protein sequence, read N- to C-terminus: Required for excision 1-B domain-containing protein (169 aa).

This is Required for excision 1-B domain-containing protein from Mus musculus (Mouse).